The chain runs to 381 residues: Glycerol-3-phosphate dehydrogenase [NAD(+)] (381 aa).

Residues methionine 1–proline 27 form a disordered region. Residues glycine 34–glycine 39, phenylalanine 66, and phenylalanine 122 contribute to the NAD(+) site. Residue lysine 145 participates in substrate binding. Alanine 178 is an NAD(+) binding site. The active-site Proton acceptor is the lysine 238. Residues arginine 303 and glutamine 332 each coordinate NAD(+). Arginine 303–asparagine 304 is a binding site for substrate.

It belongs to the NAD-dependent glycerol-3-phosphate dehydrogenase family.

It carries out the reaction sn-glycerol 3-phosphate + NAD(+) = dihydroxyacetone phosphate + NADH + H(+). The chain is Glycerol-3-phosphate dehydrogenase [NAD(+)] (GPD) from Pichia angusta (Yeast).